Consider the following 699-residue polypeptide: Endogenous retrovirus group K member 113 Env polyprotein (699 aa).

The tract at residues M1–P47 is disordered. Residues M1–S89 form the signal peptide. Residues A10–R20 show a composition bias toward basic residues. Residues L90–T632 are Extracellular-facing. N100, N128, N153, N274, N355, N372, and N461 each carry an N-linked (GlcNAc...) asparagine glycan. The interval F466–V486 is fusion peptide. N-linked (GlcNAc...) asparagine glycosylation is found at N507, N554, N566, and N585. Residues I633 to L653 traverse the membrane as a helical segment. Residues V654 to V699 are Cytoplasmic-facing.

It belongs to the beta type-B retroviral envelope protein family. HERV class-II K(HML-2) env subfamily. As to quaternary structure, the surface (SU) and transmembrane (TM) proteins form a heterodimer. SU and TM are attached by noncovalent interactions or by a labile interchain disulfide bond. In terms of processing, specific enzymatic cleavages in vivo yield the mature SU and TM proteins.

Its subcellular location is the cell membrane. The protein resides in the virion. In terms of biological role, retroviral envelope proteins mediate receptor recognition and membrane fusion during early infection. Endogenous envelope proteins may have kept, lost or modified their original function during evolution. This endogenous envelope protein has lost its original fusogenic properties. Functionally, SU mediates receptor recognition. TM anchors the envelope heterodimer to the viral membrane through one transmembrane domain. The other hydrophobic domain, called fusion peptide, mediates fusion of the viral membrane with the target cell membrane. In Homo sapiens (Human), this protein is Endogenous retrovirus group K member 113 Env polyprotein (HERVK_113).